We begin with the raw amino-acid sequence, 444 residues long: Proline--tRNA ligase (444 aa).

Belongs to the class-II aminoacyl-tRNA synthetase family. ProS type 2 subfamily. Homodimer.

It is found in the cytoplasm. It carries out the reaction tRNA(Pro) + L-proline + ATP = L-prolyl-tRNA(Pro) + AMP + diphosphate. Functionally, catalyzes the attachment of proline to tRNA(Pro) in a two-step reaction: proline is first activated by ATP to form Pro-AMP and then transferred to the acceptor end of tRNA(Pro). The protein is Proline--tRNA ligase of Maricaulis maris (strain MCS10) (Caulobacter maris).